The primary structure comprises 164 residues: FMN reductase (NADH) RutF (164 aa).

It belongs to the non-flavoprotein flavin reductase family. RutF subfamily.

It carries out the reaction FMNH2 + NAD(+) = FMN + NADH + 2 H(+). Catalyzes the reduction of FMN to FMNH2 which is used to reduce pyrimidine by RutA via the Rut pathway. The polypeptide is FMN reductase (NADH) RutF (Klebsiella pneumoniae subsp. pneumoniae (strain ATCC 700721 / MGH 78578)).